The chain runs to 846 residues: uncharacterized protein (846 aa).

6 WD repeats span residues 88-129, 132-172, 175-215, 219-258, 262-309, and 313-348; these read TKHI…LLYD, EHSR…STIT, GNSE…LPFL, AHNGVVLCVNYSPNGVFLASCGRDKTIRIWDSTSNKKKSL, NNVS…IPYR, and CHDSIVSTMHWASTELLWSCSKDGIFSQTRVENAFN. The tract at residues 541 to 560 is disordered; it reads PREASTPSESSNSSIESEDN. Over residues 544–555 the composition is skewed to low complexity; sequence ASTPSESSNSSI. The WD 7 repeat unit spans residues 624 to 663; the sequence is FHRSSVTSASIKSREAVLSAGNSSRRASIFLDQLSLHGDT.

This is an uncharacterized protein from Schizosaccharomyces pombe (strain 972 / ATCC 24843) (Fission yeast).